The primary structure comprises 522 residues: Anti-sigma-I factor RsgI4 (522 aa).

The Cytoplasmic portion of the chain corresponds to 1–51; the sequence is MNLGVVIKIKRKKAIIVTETGEFKAVNARNGMFLGQKILFDQQDVIENNRN. In terms of domain architecture, RsgI N-terminal anti-sigma spans 2–49; it reads NLGVVIKIKRKKAIIVTETGEFKAVNARNGMFLGQKILFDQQDVIENN. The helical transmembrane segment at 52–72 threads the bilayer; that stretch reads GIGLAYSAAIAGMVAVFVFMF. At 73–522 the chain is on the extracellular side; sequence TYFGLHNFNG…SGILKWGREP (450 aa). Residues 311-361 are compositionally biased toward low complexity; it reads SAKTPERATTVPVNTPVKPTDAPTKSPATATATATRAPVKATATPAKTLKP. A disordered region spans residues 311-371; it reads SAKTPERATT…SDTPVKTPDG (61 aa). Positions 371–522 constitute a CBM3 domain; sequence GEQSVKVRFY…SGILKWGREP (152 aa).

Interacts (via RsgI N-terminal anti-sigma domain) with SigI4.

The protein resides in the cell membrane. Its function is as follows. Anti-sigma factor for SigI4. Negatively regulates SigI4 activity through direct interaction. Binding of the polysaccharide substrate to the extracellular C-terminal sensing domain of RsgI4 may induce a conformational change in its N-terminal cytoplasmic region, leading to the release and activation of SigI4. The sequence is that of Anti-sigma-I factor RsgI4 from Acetivibrio thermocellus (strain ATCC 27405 / DSM 1237 / JCM 9322 / NBRC 103400 / NCIMB 10682 / NRRL B-4536 / VPI 7372) (Clostridium thermocellum).